Here is an 83-residue protein sequence, read N- to C-terminus: Mu-conotoxin-like PnMKLT1-014 (83 aa).

The signal sequence occupies residues 1-22 (MNLTCMMIVAVLFLTAWTFVMA). The propeptide occupies 23 to 50 (DDSNNGLANLFSKSRYEMEDPEPSKLEK). 3 cysteine pairs are disulfide-bonded: C54–C72, C61–C77, and C71–C82.

Belongs to the conotoxin O1 superfamily. Expressed by the venom duct.

Its subcellular location is the secreted. Functionally, mu-conotoxins block voltage-gated sodium channels (Nav). The protein is Mu-conotoxin-like PnMKLT1-014 of Conus pennaceus (Feathered cone).